Here is a 583-residue protein sequence, read N- to C-terminus: Probable GTP diphosphokinase CRSH, chloroplastic (583 aa).

Residues 1–58 (MSVIRPSPIPIPRCRSQVLHRRLYSIQLIQRRRRRWNPRSEVEDTAIESTARSPEAAG) constitute a chloroplast transit peptide. The HD domain occupies 112–212 (PLSKALSLSI…MDLVSKLDEM (101 aa)). 2 EF-hand domains span residues 470-505 (TTTNQRDRVFCLLDKNGDGMISIEELMEVMEELGAP) and 507-539 (EDAEEMMQLLDSNSDGSLSSDEFDTFQKQVEFM). 10 residues coordinate Ca(2+): Asp483, Asn485, Asp487, Met489, Glu494, Asp517, Asn519, Asp521, Ser523, and Glu528.

This sequence belongs to the RelA/SpoT family. In terms of tissue distribution, expressed in shoots, cotyledons, rosette and cauline leaves, stems, sepals, pistils and siliques.

The protein resides in the plastid. Its subcellular location is the chloroplast. The enzyme catalyses GTP + ATP = guanosine 3'-diphosphate 5'-triphosphate + AMP. With respect to regulation, activated by calcium. Functionally, possesses calcium-dependent ppGpp (guanosine 3'-diphosphate 5'-diphosphate) synthetase activity in vitro and is able to functionally complement E.coli relA mutants. Plays an important role in the timing adjustment of pistil and pollen maturation required for successful pollination. May be involved in a rapid plant ppGpp-mediated response to pathogens and other stresses. This chain is Probable GTP diphosphokinase CRSH, chloroplastic (CRSH), found in Arabidopsis thaliana (Mouse-ear cress).